Consider the following 218-residue polypeptide: Glutathione S-transferase A (218 aa).

Ser1 bears the N-acetylserine mark. One can recognise a GST N-terminal domain in the interval 2-82 (GKPVLHYFNV…YIATKYNLYG (81 aa)). N6-succinyllysine is present on Lys3. Glutathione-binding positions include Tyr8, Lys44, 53-54 (QV), and 66-67 (QS). The GST C-terminal domain maps to 84–206 (DTKERLLIDM…LQPGSQRKPF (123 aa)).

This sequence belongs to the GST superfamily. Alpha family. As to quaternary structure, homodimer or heterodimer of GSTA1 and GSTA2.

The protein localises to the cytoplasm. The enzyme catalyses RX + glutathione = an S-substituted glutathione + a halide anion + H(+). It catalyses the reaction prostaglandin A2 + glutathione = prostaglandin A2-S-(R)-glutathione. The catalysed reaction is prostaglandin J2 + glutathione = prostaglandin J2-S-(R)-glutathione. It carries out the reaction (13S)-hydroperoxy-(9Z,11E)-octadecadienoate + 2 glutathione = (13S)-hydroxy-(9Z,11E)-octadecadienoate + glutathione disulfide + H2O. The enzyme catalyses androst-5-ene-3,17-dione = androst-4-ene-3,17-dione. In terms of biological role, glutathione S-transferase that catalyzes the nucleophilic attack of the sulfur atom of glutathione on the electrophilic groups of a wide range of exogenous and endogenous compounds. Involved in the formation of glutathione conjugates of both prostaglandin A2 (PGA2) and prostaglandin J2 (PGJ2). It also catalyzes the isomerization of D5-androstene-3,17-dione (AD) into D4-androstene-3,17-dione and may therefore play an important role in hormone biosynthesis. Through its glutathione-dependent peroxidase activity toward the fatty acid hydroperoxide (13S)-hydroperoxy-(9Z,11E)-octadecadienoate/13-HPODE it is also involved in the metabolism of oxidized linoleic acid. The chain is Glutathione S-transferase A from Cavia porcellus (Guinea pig).